The sequence spans 617 residues: Dihydroxy-acid dehydratase (617 aa).

Asp-81 lines the Mg(2+) pocket. Cys-122 lines the [2Fe-2S] cluster pocket. The Mg(2+) site is built by Asp-123 and Lys-124. Lys-124 carries the post-translational modification N6-carboxylysine. Cys-195 serves as a coordination point for [2Fe-2S] cluster. Glu-491 lines the Mg(2+) pocket. Ser-517 (proton acceptor) is an active-site residue.

Belongs to the IlvD/Edd family. In terms of assembly, homodimer. It depends on [2Fe-2S] cluster as a cofactor. The cofactor is Mg(2+).

It carries out the reaction (2R)-2,3-dihydroxy-3-methylbutanoate = 3-methyl-2-oxobutanoate + H2O. It catalyses the reaction (2R,3R)-2,3-dihydroxy-3-methylpentanoate = (S)-3-methyl-2-oxopentanoate + H2O. The protein operates within amino-acid biosynthesis; L-isoleucine biosynthesis; L-isoleucine from 2-oxobutanoate: step 3/4. It functions in the pathway amino-acid biosynthesis; L-valine biosynthesis; L-valine from pyruvate: step 3/4. Its function is as follows. Functions in the biosynthesis of branched-chain amino acids. Catalyzes the dehydration of (2R,3R)-2,3-dihydroxy-3-methylpentanoate (2,3-dihydroxy-3-methylvalerate) into 2-oxo-3-methylpentanoate (2-oxo-3-methylvalerate) and of (2R)-2,3-dihydroxy-3-methylbutanoate (2,3-dihydroxyisovalerate) into 2-oxo-3-methylbutanoate (2-oxoisovalerate), the penultimate precursor to L-isoleucine and L-valine, respectively. This is Dihydroxy-acid dehydratase from Nitrosococcus oceani (strain ATCC 19707 / BCRC 17464 / JCM 30415 / NCIMB 11848 / C-107).